Reading from the N-terminus, the 192-residue chain is Interleukin-18 (192 aa).

Positions 1–35 (MAAIPVDDCINFVGMKFIDNTLYFVADSDENLETD) are excised as a propeptide.

Belongs to the IL-1 family. As to quaternary structure, forms a ternary complex with ligand-binding receptor subunit IL18R1 and signaling receptor subunit IL18RAP at the plasma membrane. Mature IL18 first binds to IL18R1 forming a low affinity binary complex, which then interacts with IL18RAP to form a high affinity ternary complex that signals inside the cell. Interacts with cargo receptor TMED10; the interaction mediates the translocation from the cytoplasm into the ERGIC (endoplasmic reticulum-Golgi intermediate compartment) and thereby secretion. Post-translationally, the pro-IL-18 precursor is processed by CASP1, CASP4 or CASP5 to yield its mature, active form. The pro-IL-18 precursor features autoinhibitory interactions between the propeptide and the post-cleavage-site region, preventing recognition by the IL18R1 receptor. Processing by CASP1, CASP4 or CASP5 induces conformational changes to generate critical receptor-binding sites. The mature form is then secreted and released in the extracellular milieu by passing through the gasdermin-D (GSDMD) pore. In contrast, cleavage by CASP3 inactivates IL18.

It is found in the cytoplasm. The protein resides in the cytosol. It localises to the secreted. Pro-inflammatory cytokine primarily involved in epithelial barrier repair, polarized T-helper 1 (Th1) cell and natural killer (NK) cell immune responses. Upon binding to IL18R1 and IL18RAP, forms a signaling ternary complex which activates NF-kappa-B, triggering synthesis of inflammatory mediators. Synergizes with IL12/interleukin-12 to induce IFNG synthesis from T-helper 1 (Th1) cells and natural killer (NK) cells. Involved in transduction of inflammation downstream of pyroptosis: its mature form is specifically released in the extracellular milieu by passing through the gasdermin-D (GSDMD) pore. This is Interleukin-18 (IL18) from Felis catus (Cat).